The following is a 271-amino-acid chain: 4-hydroxy-tetrahydrodipicolinate reductase (271 aa).

NAD(+)-binding positions include 12-17 (GGSGRM) and Glu-38. An NADP(+)-binding site is contributed by Arg-39. NAD(+)-binding positions include 102 to 104 (GTT) and 126 to 129 (APNM). His-159 functions as the Proton donor/acceptor in the catalytic mechanism. His-160 provides a ligand contact to (S)-2,3,4,5-tetrahydrodipicolinate. Lys-163 (proton donor) is an active-site residue. Residue 169 to 170 (GT) coordinates (S)-2,3,4,5-tetrahydrodipicolinate.

Belongs to the DapB family.

It is found in the cytoplasm. The enzyme catalyses (S)-2,3,4,5-tetrahydrodipicolinate + NAD(+) + H2O = (2S,4S)-4-hydroxy-2,3,4,5-tetrahydrodipicolinate + NADH + H(+). It carries out the reaction (S)-2,3,4,5-tetrahydrodipicolinate + NADP(+) + H2O = (2S,4S)-4-hydroxy-2,3,4,5-tetrahydrodipicolinate + NADPH + H(+). It functions in the pathway amino-acid biosynthesis; L-lysine biosynthesis via DAP pathway; (S)-tetrahydrodipicolinate from L-aspartate: step 4/4. Functionally, catalyzes the conversion of 4-hydroxy-tetrahydrodipicolinate (HTPA) to tetrahydrodipicolinate. This is 4-hydroxy-tetrahydrodipicolinate reductase from Shewanella sediminis (strain HAW-EB3).